The primary structure comprises 79 residues: MENLNMDLLYMAAAIMMGLAAIGAAIGIGILGGKFLEGAARQPDLIPLLRTQFFIVMGLVDAIPMIAVGLGLYVMFAVA.

Transmembrane regions (helical) follow at residues 11 to 31 (MAAA…IGIL) and 53 to 73 (FFIV…LGLY).

The protein belongs to the ATPase C chain family. F-type ATPases have 2 components, F(1) - the catalytic core - and F(0) - the membrane proton channel. F(1) has five subunits: alpha(3), beta(3), gamma(1), delta(1), epsilon(1). F(0) has three main subunits: a(1), b(2) and c(10-14). The alpha and beta chains form an alternating ring which encloses part of the gamma chain. F(1) is attached to F(0) by a central stalk formed by the gamma and epsilon chains, while a peripheral stalk is formed by the delta and b chains.

Its subcellular location is the cell inner membrane. F(1)F(0) ATP synthase produces ATP from ADP in the presence of a proton or sodium gradient. F-type ATPases consist of two structural domains, F(1) containing the extramembraneous catalytic core and F(0) containing the membrane proton channel, linked together by a central stalk and a peripheral stalk. During catalysis, ATP synthesis in the catalytic domain of F(1) is coupled via a rotary mechanism of the central stalk subunits to proton translocation. Functionally, key component of the F(0) channel; it plays a direct role in translocation across the membrane. A homomeric c-ring of between 10-14 subunits forms the central stalk rotor element with the F(1) delta and epsilon subunits. The chain is ATP synthase subunit c from Yersinia enterocolitica serotype O:8 / biotype 1B (strain NCTC 13174 / 8081).